The sequence spans 436 residues: Voltage-gated potassium channel regulatory subunit KCNG3 (436 aa).

The Cytoplasmic segment spans residues 1-168 (MTFGRSGAAS…RTFEEPTSSL (168 aa)). A helical membrane pass occupies residues 169–190 (AAQILASVSVVFVIVSMVVLCA). At 191–220 (STLPDWRNAAADNRSLDDRSRYSAGPGREP) the chain is on the extracellular side. A helical membrane pass occupies residues 221–242 (SGIIEAICIGWFTAECIVRFIV). Over 243 to 253 (SKNKCEFVKRP) the chain is Cytoplasmic. Residues 254-274 (LNIIDLLAITPYYISVLMTVF) traverse the membrane as a helical segment. Residues 275–284 (TGENSQLQRA) lie on the Extracellular side of the membrane. The chain crosses the membrane as a helical; Voltage-sensor span at residues 285–305 (GVTLRVLRMMRIFWVIKLARH). The Cytoplasmic segment spans residues 306–320 (FIGLQTLGLTLKRCY). Residues 321 to 342 (REMVMLLVFICVAMAIFSALSQ) traverse the membrane as a helical segment. Topologically, residues 343–360 (LLEHGLDLETSNKDFTSI) are extracellular. Residues 361-372 (PAACWWVIISMT) constitute an intramembrane region (helical). The Selectivity filter motif lies at 373–378 (TVGYGD). The stretch at 373-380 (TVGYGDMY) is an intramembrane region. Residues 381 to 387 (PITVPGR) lie on the Extracellular side of the membrane. A helical membrane pass occupies residues 388–416 (ILGGVCVVSGIVLLALPITFIYHSFVQCY). The Cytoplasmic portion of the chain corresponds to 417 to 436 (HELKFRSARYSRSLSTEFLN).

Belongs to the potassium channel family. G (TC 1.A.1.2) subfamily. Kv6.3/KCNG3 sub-subfamily. Heterotetramer with KCNB1. Does not form homomultimers. In terms of tissue distribution, expressed in the brain, liver, testis, small intestine, colon, thymus and adrenal gland.

The protein resides in the cell membrane. It localises to the cytoplasm. Regulatory subunit of the voltage-gated potassium (Kv) channel which, when coassembled with KCNB1, modulates the kinetics parameters of the heterotetrameric channel namely the inactivation and deactivation rate. Potassium channel subunit that does not form functional channels by itself. Reduces the deactivation rate. Moderately accelerates activation. In Homo sapiens (Human), this protein is Voltage-gated potassium channel regulatory subunit KCNG3.